Consider the following 1053-residue polypeptide: Probable dihydropyrimidine dehydrogenase [NADP(+)] (1053 aa).

A 4Fe-4S ferredoxin-type 1 domain is found at 84–115 (ERGALKEAMRCLKCADAPCQKSCPTQLDIKSF). The [4Fe-4S] cluster site is built by Cys-94, Cys-97, Cys-102, Cys-106, Cys-145, Cys-151, Cys-155, and Gln-171. FAD is bound by residues 207–211 (GCGPA), 231–239 (EKRAYIGGL), Arg-248, and Leu-274. NADP(+) contacts are provided by residues 354-357 (AGDT), 378-379 (RK), Arg-385, 451-453 (AFG), and 495-501 (DVAGVAE). Residue 494–503 (GDVAGVAETT) coordinates FAD. FMN is bound by residues Ser-574 and 598 to 599 (KT). Substrate contacts are provided by residues Asn-633 and 692-694 (NLS). Catalysis depends on Cys-695, which acts as the Proton acceptor. Residue Lys-733 coordinates FMN. Residue 760–761 (NT) participates in substrate binding. FMN is bound by residues Gly-791, 817-819 (TGG), and 840-841 (CS). 4Fe-4S ferredoxin-type domains are found at residues 949 to 981 (EVAI…FDAV) and 983 to 1013 (HQPH…MVPR). The [4Fe-4S] cluster site is built by Cys-958, Cys-961, Cys-964, Cys-968, Cys-992, Cys-995, Cys-998, and Cys-1002.

The protein belongs to the dihydropyrimidine dehydrogenase family. [4Fe-4S] cluster serves as cofactor. FAD is required as a cofactor. It depends on FMN as a cofactor.

The enzyme catalyses 5,6-dihydrouracil + NADP(+) = uracil + NADPH + H(+). The protein operates within amino-acid biosynthesis; beta-alanine biosynthesis. Involved in pyrimidine base degradation. Catalyzes the reduction of uracil and thymine. Also involved the degradation of the chemotherapeutic drug 5-fluorouracil. This is Probable dihydropyrimidine dehydrogenase [NADP(+)] from Caenorhabditis briggsae.